Here is a 337-residue protein sequence, read N- to C-terminus: MSKINLLLLCGGGSAEHDISLMSANYFETSLAKSEQFSVLRVELDKFGQYRTAAGDDCELTNSREIRFRDESKTPWPVDYVIPCIHGYPGETGDIQSYFNLIQLPYFGCESEASSNCFNKITAKMWFSALGIPNTPYIFLNQFDDAAIEQTQTALAQWGSIFVKAASQGSSVGCYKVDDSAKVAGVLKDAFGYAPYVIVEKTIKARELEVAVYEYNGEVVATVPGEIICDTNTFYTFDEKYAKNSKARTDVVAQHVSAEISEQIRAYAIKAFKGMKLRHLSRIDFFLTADNEILLNEINTFPGSTPISMFPKMLQNHGHDFTEYLSLVINGQLTAKS.

An ATP-grasp domain is found at 124-330 (KMWFSALGIP…FTEYLSLVIN (207 aa)). 154-209 (ALAQWGSIFVKAASQGSSVGCYKVDDSAKVAGVLKDAFGYAPYVIVEKTIKARELE) lines the ATP pocket. Mg(2+) is bound by residues D284, E297, and N299.

Belongs to the D-alanine--D-alanine ligase family. Mg(2+) is required as a cofactor. Mn(2+) serves as cofactor.

The protein localises to the cytoplasm. The catalysed reaction is 2 D-alanine + ATP = D-alanyl-D-alanine + ADP + phosphate + H(+). Its pathway is cell wall biogenesis; peptidoglycan biosynthesis. Cell wall formation. The protein is D-alanine--D-alanine ligase of Shewanella baltica (strain OS223).